The sequence spans 353 residues: Protein RecA (353 aa).

73–80 provides a ligand contact to ATP; sequence GPESSGKT.

The protein belongs to the RecA family.

It is found in the cytoplasm. Can catalyze the hydrolysis of ATP in the presence of single-stranded DNA, the ATP-dependent uptake of single-stranded DNA by duplex DNA, and the ATP-dependent hybridization of homologous single-stranded DNAs. It interacts with LexA causing its activation and leading to its autocatalytic cleavage. The chain is Protein RecA from Bordetella avium (strain 197N).